A 356-amino-acid chain; its full sequence is Vesicular integral-membrane protein VIP36 (356 aa).

The first 44 residues, 1 to 44, serve as a signal peptide directing secretion; the sequence is MAAEGWIWRWGWGRRCLGRPGLLGPGPGPTTPLFLLLLLGSVTA. Topologically, residues 45–322 are lumenal; that stretch reads DITDGNSEHL…FRSGPLTGWR (278 aa). The region spanning 52-276 is the L-type lectin-like domain; sequence EHLKREHSLI…DIISMKLFQL (225 aa). Residues serine 96 and aspartate 131 each contribute to the a carbohydrate site. Ca(2+) contacts are provided by aspartate 162, tyrosine 164, and asparagine 166. 164 to 166 contacts a carbohydrate; it reads YPN. N-linked (GlcNAc...) asparagine glycosylation occurs at asparagine 183. A carbohydrate is bound at residue histidine 190. A Ca(2+)-binding site is contributed by aspartate 193. The cysteines at positions 202 and 239 are disulfide-linked. A carbohydrate is bound at residue 260-262; the sequence is GDL. A helical transmembrane segment spans residues 323 to 345; the sequence is VFLLLLCALLGIVVCAVVGAVVF. The Cytoplasmic segment spans residues 346-356; it reads QKRQERNKRFY.

Ca(2+) is required as a cofactor. In terms of tissue distribution, ubiquitous.

It localises to the endoplasmic reticulum-Golgi intermediate compartment membrane. It is found in the golgi apparatus membrane. The protein localises to the endoplasmic reticulum membrane. Plays a role as an intracellular lectin in the early secretory pathway. Interacts with N-acetyl-D-galactosamine and high-mannose type glycans and may also bind to O-linked glycans. Involved in the transport and sorting of glycoproteins carrying high mannose-type glycans. This Homo sapiens (Human) protein is Vesicular integral-membrane protein VIP36 (LMAN2).